Here is a 301-residue protein sequence, read N- to C-terminus: ATP synthase gamma chain (301 aa).

Belongs to the ATPase gamma chain family. In terms of assembly, F-type ATPases have 2 components, CF(1) - the catalytic core - and CF(0) - the membrane proton channel. CF(1) has five subunits: alpha(3), beta(3), gamma(1), delta(1), epsilon(1). CF(0) has three main subunits: a, b and c.

Its subcellular location is the cell inner membrane. Produces ATP from ADP in the presence of a proton gradient across the membrane. The gamma chain is believed to be important in regulating ATPase activity and the flow of protons through the CF(0) complex. The sequence is that of ATP synthase gamma chain from Helicobacter pylori (strain HPAG1).